Consider the following 161-residue polypeptide: Lipoprotein signal peptidase (161 aa).

A run of 3 helical transmembrane segments spans residues 6–26, 67–87, and 90–110; these read ILFLITAGLVLLLDQFTKFYV, GLFFTSVTLIAAGLILFYLIK, and VSDLMMVIPLALVLAGAMGNL. Catalysis depends on residues Asp-121 and Asp-139. The chain crosses the membrane as a helical span at residues 134 to 154; it reads AFNIADTAISIGVLFLVVDMI.

Belongs to the peptidase A8 family.

The protein localises to the cell inner membrane. The catalysed reaction is Release of signal peptides from bacterial membrane prolipoproteins. Hydrolyzes -Xaa-Yaa-Zaa-|-(S,diacylglyceryl)Cys-, in which Xaa is hydrophobic (preferably Leu), and Yaa (Ala or Ser) and Zaa (Gly or Ala) have small, neutral side chains.. It functions in the pathway protein modification; lipoprotein biosynthesis (signal peptide cleavage). This protein specifically catalyzes the removal of signal peptides from prolipoproteins. The chain is Lipoprotein signal peptidase from Syntrophus aciditrophicus (strain SB).